The primary structure comprises 499 residues: MEFALTLHIEKRKKADVLVLPFWKGTSQPEAAIALHPLKLSLDSVFNTGDFKGKEGETLFLYVEGLVEMRVALLGLGEKNKVSTEALRKSYGCLAKACLGKKLKTLNILMPEFNKTEEDAFIKAITEGLLLPNYVYDRLKSKQEEDDEVTLLQKINFISSNKHVLALAEEVAAICDGVYYTRDLINGNADEITPQYLAKCAQGLSQEYPQIKTTVFDKKRLEKEQMGLLLAVNRGSNLDPTLIIMEYKGNPKSKDHTVIIGKGVTYDTGGLNIKPTGGIETMKCDMSGGAACFGTMLAACHLDLKVNLTAIIPATENSVDAASFKPGDVYRSYLGKTVEMTNSDAEGRLILADALAYASQNLKPSRLIDIATLTGAIEISLGSEASGLMSTDDQLAKSLIQAGENTHERLWRMPLYEGYQEKLKSDIADLKSWNGRSGSSCVAAMFLKNFVGKDIPWAHLDIAGTAYVTEPKKYMPKYASGVGVRLLVEFLKQLSMVKN.

2 residues coordinate Mn(2+): lysine 262 and aspartate 267. Residue lysine 274 is part of the active site. Mn(2+)-binding residues include aspartate 285, aspartate 344, and glutamate 346. Arginine 348 is an active-site residue.

The protein belongs to the peptidase M17 family. The cofactor is Mn(2+).

The protein localises to the cytoplasm. It carries out the reaction Release of an N-terminal amino acid, Xaa-|-Yaa-, in which Xaa is preferably Leu, but may be other amino acids including Pro although not Arg or Lys, and Yaa may be Pro. Amino acid amides and methyl esters are also readily hydrolyzed, but rates on arylamides are exceedingly low.. It catalyses the reaction Release of an N-terminal amino acid, preferentially leucine, but not glutamic or aspartic acids.. Its function is as follows. Presumably involved in the processing and regular turnover of intracellular proteins. Catalyzes the removal of unsubstituted N-terminal amino acids from various peptides. In Protochlamydia amoebophila (strain UWE25), this protein is Probable cytosol aminopeptidase.